We begin with the raw amino-acid sequence, 341 residues long: MRSTKTIHVISCHAEGEVGDVIVGGVAPPPGETLWEQRSFIARDQTLRNFVLNEPRGGVFRHVNLLVPPRHPEADAAFIIMEPEDTPPMSGSNSICVSTVLLDGGIVPMIEPITEMVLEAPGGLVRVKAECRNGKAERIFVQNVTSFADKLSVPLDVEGIGTLTVDTAYGGDSFVVVDAEALGFAIVEDEAKDIARLGVRITNAANEQLGFSHPENPDWNHISFCAFCGPLSQTPTGLTGRSAVAIQPGKVDRSPTGTAVSARMALMAARGQMTIGDTFEAVSIIGSSFTGRIVSQQMAGDRPGIVPEISGRGWITGIHQHMLDPSDPWPGGYKLSDTWGA.

The active-site Proton acceptor is Ser-90. Residues 91-92 (GS), Asp-252, and 257-258 (GT) each bind substrate.

This sequence belongs to the proline racemase family.

It catalyses the reaction trans-3-hydroxy-L-proline = 1-pyrroline-2-carboxylate + H2O. Catalyzes the dehydration of trans-3-hydroxy-L-proline (t3LHyp) to Delta(1)-pyrroline-2-carboxylate (Pyr2C). May be involved in a degradation pathway of t3LHyp, which would allow L.aggregata to grow on t3LHyp as a sole carbon source. Displays neither proline racemase activity nor 4-hydroxyproline 2-epimerase activity. This is Trans-3-hydroxy-L-proline dehydratase from Roseibium aggregatum (strain ATCC 25650 / DSM 13394 / JCM 20685 / NBRC 16684 / NCIMB 2208 / IAM 12614 / B1) (Stappia aggregata).